We begin with the raw amino-acid sequence, 480 residues long: Aspartyl/glutamyl-tRNA(Asn/Gln) amidotransferase subunit B (480 aa).

The protein belongs to the GatB/GatE family. GatB subfamily. As to quaternary structure, heterotrimer of A, B and C subunits.

It catalyses the reaction L-glutamyl-tRNA(Gln) + L-glutamine + ATP + H2O = L-glutaminyl-tRNA(Gln) + L-glutamate + ADP + phosphate + H(+). It carries out the reaction L-aspartyl-tRNA(Asn) + L-glutamine + ATP + H2O = L-asparaginyl-tRNA(Asn) + L-glutamate + ADP + phosphate + 2 H(+). Its function is as follows. Allows the formation of correctly charged Asn-tRNA(Asn) or Gln-tRNA(Gln) through the transamidation of misacylated Asp-tRNA(Asn) or Glu-tRNA(Gln) in organisms which lack either or both of asparaginyl-tRNA or glutaminyl-tRNA synthetases. The reaction takes place in the presence of glutamine and ATP through an activated phospho-Asp-tRNA(Asn) or phospho-Glu-tRNA(Gln). The polypeptide is Aspartyl/glutamyl-tRNA(Asn/Gln) amidotransferase subunit B (Streptococcus thermophilus (strain ATCC BAA-250 / LMG 18311)).